We begin with the raw amino-acid sequence, 608 residues long: Coilin (608 aa).

Residues 134–272 form a disordered region; the sequence is KETGGYESES…RKKAKRQWLR (139 aa). Positions 141–155 are enriched in acidic residues; that stretch reads SESEEDELEEEAEEF. Over residues 161–179 the composition is skewed to basic residues; the sequence is ASKKRKTSSKNQSTKRKKC. The Nuclear localization signal 1 motif lies at 163 to 170; it reads KKRKTSSK. Residue Ser187 is modified to Phosphoserine. Residues 211 to 228 show a composition bias toward polar residues; that stretch reads DVQSANNDEQNNDSTKPM. Over residues 235–245 the composition is skewed to basic and acidic residues; the sequence is SQQEESKEHND. Positions 253–260 match the Nuclear localization signal 2 motif; the sequence is TKKTPSRS. Over residues 256–269 the composition is skewed to basic residues; that stretch reads TPSRSARRKKAKRQ. The 101-residue stretch at 410 to 510 folds into the Tudor; atypical domain; sequence YEQLVAYTGS…LLDVRSVKTS (101 aa). A disordered region spans residues 513–585; sequence DSAEVAKSAL…KKGSSSGGSW (73 aa). Positions 558-585 are enriched in low complexity; it reads EALSAKKAALSQANNGWNKKGSSSGGSW.

It belongs to the coilin family. Homooligomer. Interaction with RNA results in multimerization due to structural alteration in the NOD domain.

The protein localises to the nucleus. Its subcellular location is the cajal body. Its function is as follows. Probable component of nuclear coiled bodies, also known as Cajal bodies or CBs, which are involved in the modification and assembly of nucleoplasmic snRNPs. Required for CBs formation. Binds snRNAs and non-specific artificial RNA via the N-terminal part of the NOD domain and via the NLS2 region (212-282) of the IDD domain. The two sites are able to function independently and provide effective RNA-binding in a non-cooperative manner. This is Coilin from Arabidopsis thaliana (Mouse-ear cress).